Here is a 337-residue protein sequence, read N- to C-terminus: Phosphatidate cytidylyltransferase, mitochondrial (337 aa).

Belongs to the TAM41 family. Mg(2+) is required as a cofactor.

The protein resides in the mitochondrion inner membrane. The enzyme catalyses a 1,2-diacyl-sn-glycero-3-phosphate + CTP + H(+) = a CDP-1,2-diacyl-sn-glycerol + diphosphate. The protein operates within phospholipid metabolism; CDP-diacylglycerol biosynthesis; CDP-diacylglycerol from sn-glycerol 3-phosphate: step 3/3. Catalyzes the conversion of phosphatidic acid (PA) to CDP-diacylglycerol (CDP-DAG), an essential intermediate in the synthesis of phosphatidylglycerol, cardiolipin and phosphatidylinositol. This is Phosphatidate cytidylyltransferase, mitochondrial (Tamm41) from Mus musculus (Mouse).